A 146-amino-acid polypeptide reads, in one-letter code: MAAPVEQTIKLQIKGGQANPAPPIGPALGQHGVNIMEFCKAFNSRTEDRMGTLLPVEITVYADRSFDFIVKSPPASVLLKQKADIETAAGDPLRDDAGTVTWDDCLDIADQKLQDLNAHTVEKGASMVAGTARSMGITVEGKPAHE.

The protein belongs to the universal ribosomal protein uL11 family. As to quaternary structure, part of the ribosomal stalk of the 50S ribosomal subunit. Interacts with L10 and the large rRNA to form the base of the stalk. L10 forms an elongated spine to which L12 dimers bind in a sequential fashion forming a multimeric L10(L12)X complex. Post-translationally, one or more lysine residues are methylated.

Forms part of the ribosomal stalk which helps the ribosome interact with GTP-bound translation factors. This Salinibacter ruber (strain DSM 13855 / M31) protein is Large ribosomal subunit protein uL11.